We begin with the raw amino-acid sequence, 158 residues long: NAD(P)H-quinone oxidoreductase subunit J, chloroplastic (158 aa).

The protein belongs to the complex I 30 kDa subunit family. In terms of assembly, NDH is composed of at least 16 different subunits, 5 of which are encoded in the nucleus.

The protein resides in the plastid. It localises to the chloroplast thylakoid membrane. It catalyses the reaction a plastoquinone + NADH + (n+1) H(+)(in) = a plastoquinol + NAD(+) + n H(+)(out). It carries out the reaction a plastoquinone + NADPH + (n+1) H(+)(in) = a plastoquinol + NADP(+) + n H(+)(out). NDH shuttles electrons from NAD(P)H:plastoquinone, via FMN and iron-sulfur (Fe-S) centers, to quinones in the photosynthetic chain and possibly in a chloroplast respiratory chain. The immediate electron acceptor for the enzyme in this species is believed to be plastoquinone. Couples the redox reaction to proton translocation, and thus conserves the redox energy in a proton gradient. This is NAD(P)H-quinone oxidoreductase subunit J, chloroplastic from Liriodendron tulipifera (Tuliptree).